A 170-amino-acid chain; its full sequence is Centrin-2 (170 aa).

The disordered stretch occupies residues 1–21; that stretch reads MQRGALRGASPTARRRLVDRP. EF-hand domains lie at 26–61, 62–97, 99–134, and 135–170; these read DEIEEIREAFNLFDTDGSGMIDPKELKAAMQSLGFE, TKNPTIYQMIADLDRDSGGPIDFEEFLDAITAKLGD, ESREGIQKIFSLFDDDRTGTITLKNLKRVAKELGET, and MSEDELREMLERADSNGDGEISFEDFYAIMTKKTFP. Residues Asp39, Asp41, Ser43, Met45, and Glu50 each coordinate Ca(2+).

The protein belongs to the centrin family. As to quaternary structure, monomer. Does not homooligomerize.

It localises to the cytoplasm. Its subcellular location is the cytoskeleton. It is found in the microtubule organizing center. The protein localises to the centrosome. Its function is as follows. In tachyzoites, plays an essential role in microneme secretion that ensures parasite motility and attachment to, invasion of and egress from host cells. Also involved in the architecture of the peripheral annuli where it appears to regulate the localization of PAP2. In association with the myosin motor MyoJ, involved in the constriction of the basal complex at the end of daughter cell division in an actin-dependent manner; the basal complex is a cytoskeletal structure formed at the tachyzoite basal pole during daughter cell formation. May be involved in parasite replication. The sequence is that of Centrin-2 from Toxoplasma gondii (strain ATCC 50611 / Me49).